The primary structure comprises 105 residues: Nucleoid-associated protein ABC0038 (105 aa).

Residues 1–22 (MEMKNMGNMMKQMQKMQKQMMK) show a composition bias toward low complexity. The tract at residues 1-26 (MEMKNMGNMMKQMQKMQKQMMKAQEE) is disordered.

This sequence belongs to the YbaB/EbfC family. Homodimer.

It localises to the cytoplasm. It is found in the nucleoid. In terms of biological role, binds to DNA and alters its conformation. May be involved in regulation of gene expression, nucleoid organization and DNA protection. This Shouchella clausii (strain KSM-K16) (Alkalihalobacillus clausii) protein is Nucleoid-associated protein ABC0038.